The primary structure comprises 247 residues: ATP synthase subunit a, chloroplastic (247 aa).

A run of 5 helical transmembrane segments spans residues glutamine 38 to valine 58, valine 95 to leucine 115, isoleucine 134 to serine 154, leucine 199 to leucine 219, and glycine 220 to glycine 240.

The protein belongs to the ATPase A chain family. In terms of assembly, F-type ATPases have 2 components, CF(1) - the catalytic core - and CF(0) - the membrane proton channel. CF(1) has five subunits: alpha(3), beta(3), gamma(1), delta(1), epsilon(1). CF(0) has four main subunits: a, b, b' and c.

It localises to the plastid. Its subcellular location is the chloroplast thylakoid membrane. Its function is as follows. Key component of the proton channel; it plays a direct role in the translocation of protons across the membrane. The sequence is that of ATP synthase subunit a, chloroplastic from Populus trichocarpa (Western balsam poplar).